A 508-amino-acid chain; its full sequence is Arabinose import ATP-binding protein AraG (508 aa).

ABC transporter domains lie at 5–240 and 250–496; these read LEFQ…MVGR and ARTL…LPDA. 37–44 is a binding site for ATP; sequence GENGAGKS.

It belongs to the ABC transporter superfamily. Arabinose importer (TC 3.A.1.2.2) family. In terms of assembly, the complex is composed of two ATP-binding proteins (AraG), two transmembrane proteins (AraH) and a solute-binding protein (AraF).

The protein resides in the cell inner membrane. It carries out the reaction L-arabinose(out) + ATP + H2O = L-arabinose(in) + ADP + phosphate + H(+). In terms of biological role, part of the ABC transporter complex AraFGH involved in arabinose import. Responsible for energy coupling to the transport system. The chain is Arabinose import ATP-binding protein AraG from Rhizobium meliloti (strain 1021) (Ensifer meliloti).